Here is a 290-residue protein sequence, read N- to C-terminus: Protein male abnormal 3 (290 aa).

2 consecutive DNA-binding regions (DM) follow at residues 28 to 74 (CQRC…SKKK) and 94 to 142 (CARC…KLRR). Disordered regions lie at residues 139 to 167 (KLRR…MDME) and 179 to 202 (IIGT…LSMS). The span at 146 to 155 (KSRDGKEPKR) shows a compositional bias: basic and acidic residues. Low complexity predominate over residues 182–202 (TSASPSPSSTTDTMSPSLSMS).

Expression is undetectable in hermaphrodites, but persists in males. In males, expressed in cells of the tail tip.

Its subcellular location is the nucleus. Functionally, transcription factor which binds the DNA motif 5'-[CGA][TCA][TA]ACAATGT[AT][TGA]C-3', probably as a monomer. Acts partially redundantly with the transcription factor dmd-3 to coordinate tail tip cell fusion and retraction and thereby regulate male tail tip morphogenesis. Promotes male-specific development of two tissues, the peripheral nervous system and the intestine. In the peripheral nervous system, directs differentiation of sensory ray neuroblasts into peripheral sense organs. In the intestine, causes repression of vitellogenin gene transcription. This is Protein male abnormal 3 from Caenorhabditis elegans.